A 559-amino-acid polypeptide reads, in one-letter code: 5'-AMP-activated protein kinase catalytic subunit alpha-1 (559 aa).

One can recognise a Protein kinase domain in the interval 27 to 279 (YILGDTLGVG…IKDIREHEWF (253 aa)). A Phosphothreonine modification is found at Thr32. Residues 33 to 41 (LGVGTFGKV) and Lys56 each bind ATP. The active-site Proton acceptor is Asp150. Thr183 carries the post-translational modification Phosphothreonine; by LKB1 and CaMKK2. 2 positions are modified to phosphothreonine: Thr269 and Thr355. The interval 302–381 (EALKEVCEKF…PERVPFLVAE (80 aa)) is AIS. Ser356 bears the Phosphoserine mark. Ser360 carries the post-translational modification Phosphoserine; by ULK1. Thr368 bears the Phosphothreonine; by ULK1 mark. Phosphothreonine is present on Thr382. Position 397 is a phosphoserine; by ULK1 (Ser397). Phosphoserine occurs at positions 467 and 486. The segment at 484-536 (AKSGTATPQRSGSISNYRSCQRSDSDAEAQGKPSEVSLTSSVTSLDSSPVDVA) is disordered. Residues 485–505 (KSGTATPQRSGSISNYRSCQR) are compositionally biased toward polar residues. A Phosphoserine; by ULK1 modification is found at Ser486. Thr488 is subject to Phosphothreonine; by ULK1. Phosphothreonine is present on Thr490. Residues Ser496, Ser508, Ser524, and Ser527 each carry the phosphoserine modification. Over residues 516–535 (PSEVSLTSSVTSLDSSPVDV) the composition is skewed to low complexity.

The protein belongs to the protein kinase superfamily. CAMK Ser/Thr protein kinase family. SNF1 subfamily. As to quaternary structure, AMPK is a heterotrimer of an alpha catalytic subunit (PRKAA1 or PRKAA2), a beta (PRKAB1 or PRKAB2) and a gamma non-catalytic subunits (PRKAG1, PRKAG2 or PRKAG3). Interacts with FNIP1 and FNIP2. Requires Mg(2+) as cofactor. Ubiquitinated. Post-translationally, phosphorylated at Thr-183 by STK11/LKB1 in complex with STE20-related adapter-alpha (STRADA) pseudo kinase and CAB39. Also phosphorylated at Thr-183 by CAMKK2; triggered by a rise in intracellular calcium ions, without detectable changes in the AMP/ATP ratio. CAMKK1 can also phosphorylate Thr-183, but at a much lower level. Dephosphorylated by protein phosphatase 2A and 2C (PP2A and PP2C). Phosphorylated by ULK1 and ULK2; leading to negatively regulate AMPK activity and suggesting the existence of a regulatory feedback loop between ULK1, ULK2 and AMPK. There is some ambiguity for some phosphosites: Ser-360/Thr-368 and Ser-486/Thr-488. Dephosphorylated by PPM1A and PPM1B. In terms of processing, glycosylated; O-GlcNAcylated by OGT, promoting the AMP-activated protein kinase (AMPK) activity. As to expression, low expression in kidney, liver, lung, heart and brain.

It localises to the cytoplasm. The protein resides in the nucleus. It catalyses the reaction L-seryl-[protein] + ATP = O-phospho-L-seryl-[protein] + ADP + H(+). The enzyme catalyses L-threonyl-[protein] + ATP = O-phospho-L-threonyl-[protein] + ADP + H(+). It carries out the reaction L-seryl-[acetyl-CoA carboxylase] + ATP = O-phospho-L-seryl-[acetyl-CoA carboxylase] + ADP + H(+). The catalysed reaction is L-seryl-[3-hydroxy-3-methylglutaryl-coenzyme A reductase] + ATP = O-phospho-L-seryl-[3-hydroxy-3-methylglutaryl-coenzyme A reductase] + ADP + H(+). It catalyses the reaction L-seryl-[tau protein] + ATP = O-phospho-L-seryl-[tau protein] + ADP + H(+). The enzyme catalyses L-threonyl-[tau protein] + ATP = O-phospho-L-threonyl-[tau protein] + ADP + H(+). With respect to regulation, activated by phosphorylation on Thr-183. Binding of AMP to non-catalytic gamma subunit (PRKAG1, PRKAG2 or PRKAG3) results in allosteric activation, inducing phosphorylation on Thr-183. AMP-binding to gamma subunit also sustains activity by preventing dephosphorylation of Thr-183. ADP also stimulates Thr-183 phosphorylation, without stimulating already phosphorylated AMPK. ATP promotes dephosphorylation of Thr-183, rendering the enzyme inactive. Under physiological conditions AMPK mainly exists in its inactive form in complex with ATP, which is much more abundant than AMP. Selectively inhibited by compound C (6-[4-(2-Piperidin-1-yl-ethoxy)-phenyl)]-3-pyridin-4-yl-pyyrazolo[1,5-a] pyrimidine. Activated by resveratrol, a natural polyphenol present in red wine, and S17834, a synthetic polyphenol. In terms of biological role, catalytic subunit of AMP-activated protein kinase (AMPK), an energy sensor protein kinase that plays a key role in regulating cellular energy metabolism. In response to reduction of intracellular ATP levels, AMPK activates energy-producing pathways and inhibits energy-consuming processes: inhibits protein, carbohydrate and lipid biosynthesis, as well as cell growth and proliferation. AMPK acts via direct phosphorylation of metabolic enzymes, and by longer-term effects via phosphorylation of transcription regulators. Regulates lipid synthesis by phosphorylating and inactivating lipid metabolic enzymes such as ACACA, ACACB, GYS1, HMGCR and LIPE; regulates fatty acid and cholesterol synthesis by phosphorylating acetyl-CoA carboxylase (ACACA and ACACB) and hormone-sensitive lipase (LIPE) enzymes, respectively. Promotes lipolysis of lipid droplets by mediating phosphorylation of isoform 1 of CHKA (CHKalpha2). Regulates insulin-signaling and glycolysis by phosphorylating IRS1, PFKFB2 and PFKFB3. AMPK stimulates glucose uptake in muscle by increasing the translocation of the glucose transporter SLC2A4/GLUT4 to the plasma membrane, possibly by mediating phosphorylation of TBC1D4/AS160. Regulates transcription and chromatin structure by phosphorylating transcription regulators involved in energy metabolism such as CRTC2/TORC2, FOXO3, histone H2B, HDAC5, MEF2C, MLXIPL/ChREBP, EP300, HNF4A, p53/TP53, SREBF1, SREBF2 and PPARGC1A. Acts as a key regulator of glucose homeostasis in liver by phosphorylating CRTC2/TORC2, leading to CRTC2/TORC2 sequestration in the cytoplasm. In response to stress, phosphorylates 'Ser-36' of histone H2B (H2BS36ph), leading to promote transcription. Acts as a key regulator of cell growth and proliferation by phosphorylating FNIP1, TSC2, RPTOR, WDR24 and ATG1/ULK1: in response to nutrient limitation, negatively regulates the mTORC1 complex by phosphorylating RPTOR component of the mTORC1 complex and by phosphorylating and activating TSC2. Also phosphorylates and inhibits GATOR2 subunit WDR24 in response to nutrient limitation, leading to suppress glucose-mediated mTORC1 activation. In response to energetic stress, phosphorylates FNIP1, inactivating the non-canonical mTORC1 signaling, thereby promoting nuclear translocation of TFEB and TFE3, and inducing transcription of lysosomal or autophagy genes. In response to nutrient limitation, promotes autophagy by phosphorylating and activating ATG1/ULK1. In that process, it also activates WDR45/WIPI4. Phosphorylates CASP6, thereby preventing its autoprocessing and subsequent activation. In response to nutrient limitation, phosphorylates transcription factor FOXO3 promoting FOXO3 mitochondrial import. Also acts as a regulator of cellular polarity by remodeling the actin cytoskeleton; probably by indirectly activating myosin. AMPK also acts as a regulator of circadian rhythm by mediating phosphorylation of CRY1, leading to destabilize it. May regulate the Wnt signaling pathway by phosphorylating CTNNB1, leading to stabilize it. Also has tau-protein kinase activity: in response to amyloid beta A4 protein (APP) exposure, activated by CAMKK2, leading to phosphorylation of MAPT/TAU; however the relevance of such data remains unclear in vivo. Also phosphorylates CFTR, EEF2K, KLC1, NOS3 and SLC12A1. Regulates hepatic lipogenesis. Activated via SIRT3, represses sterol regulatory element-binding protein (SREBP) transcriptional activities and ATP-consuming lipogenesis to restore cellular energy balance. Upon stress, regulates mitochondrial fragmentation through phosphorylation of MTFR1L. The chain is 5'-AMP-activated protein kinase catalytic subunit alpha-1 (Prkaa1) from Rattus norvegicus (Rat).